The sequence spans 173 residues: Shikimate kinase 1 (173 aa).

14–19 serves as a coordination point for ATP; sequence GAGKST. Residue S18 participates in Mg(2+) binding. Substrate-binding residues include D36, R60, and G82. R120 provides a ligand contact to ATP. R140 lines the substrate pocket. An ATP-binding site is contributed by Q157.

The protein belongs to the shikimate kinase family. Monomer. It depends on Mg(2+) as a cofactor.

The protein localises to the cytoplasm. The catalysed reaction is shikimate + ATP = 3-phosphoshikimate + ADP + H(+). It participates in metabolic intermediate biosynthesis; chorismate biosynthesis; chorismate from D-erythrose 4-phosphate and phosphoenolpyruvate: step 5/7. Its function is as follows. Catalyzes the specific phosphorylation of the 3-hydroxyl group of shikimic acid using ATP as a cosubstrate. The polypeptide is Shikimate kinase 1 (Serratia proteamaculans (strain 568)).